Here is a 328-residue protein sequence, read N- to C-terminus: Flotillin-like protein FloA (328 aa).

The next 2 helical transmembrane spans lie at 1–21 (MFGLGIIVIAVIIVIALLVLF) and 26–46 (VGLWISAIAAGVKVGIGTLVG).

It belongs to the flotillin-like FloA family. Homooligomerizes.

It is found in the cell membrane. Its subcellular location is the membrane raft. In terms of biological role, found in functional membrane microdomains (FMM) that may be equivalent to eukaryotic membrane rafts. FMMs are highly dynamic and increase in number as cells age. Flotillins are thought to be important factors in membrane fluidity. The protein is Flotillin-like protein FloA of Staphylococcus haemolyticus (strain JCSC1435).